Reading from the N-terminus, the 320-residue chain is Beta-ketoacyl-[acyl-carrier-protein] synthase III (320 aa).

Residues Cys112 and His245 contribute to the active site. The interval 246–250 is ACP-binding; sequence QANIR. Asn275 is a catalytic residue.

Belongs to the thiolase-like superfamily. FabH family. As to quaternary structure, homodimer.

The protein localises to the cytoplasm. The enzyme catalyses malonyl-[ACP] + acetyl-CoA + H(+) = 3-oxobutanoyl-[ACP] + CO2 + CoA. The protein operates within lipid metabolism; fatty acid biosynthesis. Catalyzes the condensation reaction of fatty acid synthesis by the addition to an acyl acceptor of two carbons from malonyl-ACP. Catalyzes the first condensation reaction which initiates fatty acid synthesis and may therefore play a role in governing the total rate of fatty acid production. Possesses both acetoacetyl-ACP synthase and acetyl transacylase activities. Its substrate specificity determines the biosynthesis of branched-chain and/or straight-chain of fatty acids. This chain is Beta-ketoacyl-[acyl-carrier-protein] synthase III, found in Streptococcus thermophilus (strain ATCC BAA-250 / LMG 18311).